A 210-amino-acid chain; its full sequence is Ribosomal RNA large subunit methyltransferase E (210 aa).

Positions 67, 69, 87, 103, and 128 each coordinate S-adenosyl-L-methionine. Lys-168 serves as the catalytic Proton acceptor.

The protein belongs to the class I-like SAM-binding methyltransferase superfamily. RNA methyltransferase RlmE family.

The protein resides in the cytoplasm. It carries out the reaction uridine(2552) in 23S rRNA + S-adenosyl-L-methionine = 2'-O-methyluridine(2552) in 23S rRNA + S-adenosyl-L-homocysteine + H(+). In terms of biological role, specifically methylates the uridine in position 2552 of 23S rRNA at the 2'-O position of the ribose in the fully assembled 50S ribosomal subunit. The sequence is that of Ribosomal RNA large subunit methyltransferase E from Psychrobacter sp. (strain PRwf-1).